A 261-amino-acid chain; its full sequence is Indole-3-glycerol phosphate synthase (261 aa).

Belongs to the TrpC family.

The catalysed reaction is 1-(2-carboxyphenylamino)-1-deoxy-D-ribulose 5-phosphate + H(+) = (1S,2R)-1-C-(indol-3-yl)glycerol 3-phosphate + CO2 + H2O. It participates in amino-acid biosynthesis; L-tryptophan biosynthesis; L-tryptophan from chorismate: step 4/5. In Oceanobacillus iheyensis (strain DSM 14371 / CIP 107618 / JCM 11309 / KCTC 3954 / HTE831), this protein is Indole-3-glycerol phosphate synthase.